The chain runs to 210 residues: Glutathione S-transferase 2 (210 aa).

Positions 1 to 80 (MDFYYLPLSA…YLVEKYGKQN (80 aa)) constitute a GST N-terminal domain. Glutathione contacts are provided by residues serine 9, 50-52 (HTI), and 64-66 (ESR). Residues 87-208 (CPKKRALINQ…AGCLEMKKYF (122 aa)) enclose the GST C-terminal domain.

This sequence belongs to the GST superfamily. Theta family. In terms of assembly, homodimer.

The enzyme catalyses RX + glutathione = an S-substituted glutathione + a halide anion + H(+). Functionally, conjugation of reduced glutathione to a wide number of exogenous and endogenous hydrophobic electrophiles. The sequence is that of Glutathione S-transferase 2 (Gst2) from Musca domestica (House fly).